The chain runs to 562 residues: MSENGSVDEIKVEEFNNEAGQTVESGELSEDNELNRKTGRNLNLIKCEECGLICAGQSHYNVHIRSHTGERPFKCHICGVAFTQKGNLRRHYKIHSDEKPFQCPICSYRCRRRDALNGHMRIHSDMRPYRCSYCARSYKSRQSMKEHEYQCPYKSDPVQPTPPGSEGFPFQNEAVMRNPLALPGPRPSTSQPAPVLSQLGQLGARPPPYPPANINELLALRARLMAPGAQHAPPPPQIRPGLPGFFGNAIPQMPPTTLQQPFNAESHRSAVGMGGTHALALHIRRLLANAVQQNQQPGGLRNSLEKPSLSEATPSSHSSHSSAEDSGQVNKFSPTESKVKPTDINQNVAKILANMVQPHPQLEDVPLPDSRKRPHSFESEPTPKRMRSPNPTNLNLDDSHKEDDVITSESPLEITNERKTFFPHVDAAERTVEAIEDNDEDDVDISVEQLDESKNEISSVDSRSPLDQSSTQDDRMEIKAQISVFKNGAKLNSWECKTCNCIFLNEITYRIHMGVHMHSDPLVCNSCGKRCSDQQEFQAHLVHHQHVSKTVVTAPPKATNVV.

C2H2-type zinc fingers lie at residues 45–67 (IKCEECGLICAGQSHYNVHIRSH), 73–95 (FKCHICGVAFTQKGNLRRHYKIH), and 101–123 (FQCPICSYRCRRRDALNGHMRIH). Residues 129-152 (YRCSYCARSYKSRQSMKEHEYQCP) form a C2H2-type 4; degenerate zinc finger. Disordered stretches follow at residues 178–210 (NPLALPGPRPSTSQPAPVLSQLGQLGARPPPYP), 293–342 (QNQQ…VKPT), 361–404 (QLED…KEDD), and 451–473 (DESKNEISSVDSRSPLDQSSTQD). A compositionally biased stretch (low complexity) spans 307–326 (PSLSEATPSSHSSHSSAEDS). Over residues 327–336 (GQVNKFSPTE) the composition is skewed to polar residues. The span at 369–383 (DSRKRPHSFESEPTP) shows a compositional bias: basic and acidic residues. Positions 456 to 471 (EISSVDSRSPLDQSST) are enriched in polar residues. 2 consecutive C2H2-type zinc fingers follow at residues 494–516 (WECKTCNCIFLNEITYRIHMGVH) and 522–546 (LVCNSCGKRCSDQQEFQAHLVHHQH).

The protein belongs to the Ikaros C2H2-type zinc-finger protein family. In terms of tissue distribution, expression is strongest in the anterior Fol cells of the oikoplastic epithelium.

It localises to the nucleus. This is Ikaros family zinc finger protein from Oikopleura dioica (Tunicate).